A 99-amino-acid chain; its full sequence is uncharacterized protein (99 aa).

It is found in the mitochondrion. This is an uncharacterized protein from Marchantia polymorpha (Common liverwort).